The chain runs to 554 residues: Zinc finger protein 426 (554 aa).

Positions 42–112 (VTFDDVAVDF…QGGVLQGWEM (71 aa)) constitute a KRAB domain. A C2H2-type 1; atypical zinc finger spans residues 146–174 (CDCEQCGEVFSEHSCLKTHVRTQSTGNTH). C2H2-type zinc fingers lie at residues 224–246 (FECSHCGKSFINESYLQAHMRTH), 280–302 (YKCKECGKGYRYPAYLSIHMRTH), 308–330 (YECKECGKAFNYSNSFQIHGRTH), 336–358 (YVCKECGKAFTQYSGLSMHVRSH), 364–386 (YECKECGKSFLTSSRLIQHIRTH), 392–414 (FVCVECGKAFAVSSNLSGHLRTH), 420–442 (CECKICGKVFGYPSCLNNHMRTH), 448–470 (YTCKECGKAFNYSTHLKIHMRIH), 476–498 (YECKQCGKAFSHSSSFQIHERTH), 504–526 (YECKECGKAFTCSSSFRIHEKTH), and 532–554 (YKCQQCGKAYSHPRSLRRHEQIH).

It localises to the nucleus. Functionally, may be involved in transcriptional regulation. This chain is Zinc finger protein 426 (ZNF426), found in Homo sapiens (Human).